A 473-amino-acid polypeptide reads, in one-letter code: FAD-dependent oxidoreductase dpasF (473 aa).

The N-terminal stretch at 1–21 is a signal peptide; that stretch reads MNRLLASALLVGSAVVAPVSA. N-linked (GlcNAc...) asparagine glycosylation is found at Asn-26, Asn-54, Asn-92, Asn-133, Asn-185, Asn-276, and Asn-401.

The protein belongs to the beta-cyclopiazonate dehydrogenase family. The cofactor is FAD.

Its pathway is secondary metabolite biosynthesis; terpenoid biosynthesis. Its function is as follows. FAD-dependent oxidoreductase; part of the gene cluster that mediates the biosynthesis of the diterpenoid pyrones subglutinols A and B. The first step of the pathway is the synthesis of the alpha-pyrone moiety by the polyketide synthase dpasA via condensation of one acetyl-CoA starter unit with 3 malonyl-CoA units and 2 methylations. The alpha-pyrone is then combined with geranylgeranyl pyrophosphate (GGPP) formed by the GGPP synthase dpasD through the action of the prenyltransferase dpasC to yield a linear alpha-pyrone diterpenoid. Subsequent steps in the diterpenoid pyrone biosynthetic pathway involve the decalin core formation, which is initiated by the epoxidation of the C10-C11 olefin by the FAD-dependent oxidoreductase dpasE, and is followed by a cyclization cascade catalyzed by the terpene cyclase dpasB. The FAD-linked oxidoreductase dpasF is then involved in tetrahydrofuran (THF) ring formation at the C5 unit to complete the formation of subglutinols A and B. DpasF possesses also an additional catalytic ability of multi-step oxidations to generate a new DDP analog with an enone system at the C5 named FDDP A. The protein is FAD-dependent oxidoreductase dpasF of Apiospora sacchari (Arthrinium sacchari).